The primary structure comprises 231 residues: Ubiquinone biosynthesis protein coq-4, mitochondrial (231 aa).

Zn(2+) contacts are provided by H133, D134, H137, and E149.

Belongs to the COQ4 family. Component of a multi-subunit COQ enzyme complex. The cofactor is Zn(2+).

It is found in the mitochondrion inner membrane. The catalysed reaction is a 4-hydroxy-3-methoxy-5-(all-trans-polyprenyl)benzoate + H(+) = a 2-methoxy-6-(all-trans-polyprenyl)phenol + CO2. It functions in the pathway cofactor biosynthesis; ubiquinone biosynthesis. Its function is as follows. Lyase that catalyzes the C1-decarboxylation of 4-hydroxy-3-methoxy-5-(all-trans-polyprenyl)benzoic acid into 2-methoxy-6-(all-trans-polyprenyl)phenol during ubiquinone biosynthesis. The polypeptide is Ubiquinone biosynthesis protein coq-4, mitochondrial (Caenorhabditis elegans).